Here is a 202-residue protein sequence, read N- to C-terminus: MADPRVEELPDEEVPKTNVEDAGSSSESEAGDEPTIPGGAAVTIHSRNEKKARKAIGKLGLKHVPGITRVTLRRPKNILFVINQPDVYRSPSSNTWIIFGEAKIEDLNATAQATAAQQLAEAAANEHAGHDHEHDHGKGKAPEAEAKKEEEEDDGEEVDESGLEAKDIELVMAQANVSRKKAVKALRENDNDIVNSIMALSI.

Over residues 1-19 the composition is skewed to basic and acidic residues; that stretch reads MADPRVEELPDEEVPKTNV. The tract at residues 1–42 is disordered; the sequence is MADPRVEELPDEEVPKTNVEDAGSSSESEAGDEPTIPGGAAV. In terms of domain architecture, NAC-A/B spans 46–111; it reads SRNEKKARKA…AKIEDLNATA (66 aa). The segment covering 117-126 has biased composition (low complexity); it reads QQLAEAAANE. The interval 117-165 is disordered; sequence QQLAEAAANEHAGHDHEHDHGKGKAPEAEAKKEEEEDDGEEVDESGLEA. Basic and acidic residues predominate over residues 127–149; it reads HAGHDHEHDHGKGKAPEAEAKKE. Residues 150–162 are compositionally biased toward acidic residues; the sequence is EEEDDGEEVDESG. The UBA domain occupies 163–202; that stretch reads LEAKDIELVMAQANVSRKKAVKALRENDNDIVNSIMALSI.

The protein belongs to the NAC-alpha family. As to quaternary structure, part of the nascent polypeptide-associated complex (NAC), consisting of egd2 and egd1. NAC associates with ribosomes via egd1.

The protein localises to the cytoplasm. It localises to the nucleus. Component of the nascent polypeptide-associated complex (NAC), a dynamic component of the ribosomal exit tunnel, protecting the emerging polypeptides from interaction with other cytoplasmic proteins to ensure appropriate nascent protein targeting. The NAC complex also promotes mitochondrial protein import by enhancing productive ribosome interactions with the outer mitochondrial membrane and blocks the inappropriate interaction of ribosomes translating non-secretory nascent polypeptides with translocation sites in the membrane of the endoplasmic reticulum. Egd2 may also be involved in transcription regulation. This Aspergillus niger (strain ATCC MYA-4892 / CBS 513.88 / FGSC A1513) protein is Nascent polypeptide-associated complex subunit alpha (egd2).